A 696-amino-acid chain; its full sequence is Elongation factor G (696 aa).

A tr-type G domain is found at 8-286 (EDVRNIGIAA…AVVAYLPAPT (279 aa)). Residues 17–24 (AHIDAGKT), 81–85 (DTPGH), and 135–138 (NKMD) contribute to the GTP site.

The protein belongs to the TRAFAC class translation factor GTPase superfamily. Classic translation factor GTPase family. EF-G/EF-2 subfamily.

It is found in the cytoplasm. Functionally, catalyzes the GTP-dependent ribosomal translocation step during translation elongation. During this step, the ribosome changes from the pre-translocational (PRE) to the post-translocational (POST) state as the newly formed A-site-bound peptidyl-tRNA and P-site-bound deacylated tRNA move to the P and E sites, respectively. Catalyzes the coordinated movement of the two tRNA molecules, the mRNA and conformational changes in the ribosome. The polypeptide is Elongation factor G (Sulfurimonas denitrificans (strain ATCC 33889 / DSM 1251) (Thiomicrospira denitrificans (strain ATCC 33889 / DSM 1251))).